The sequence spans 303 residues: Putative S-adenosyl-L-methionine-dependent methyltransferase SCO6443 (303 aa).

Residues Asp130 and 159–160 (DL) each bind S-adenosyl-L-methionine.

The protein belongs to the UPF0677 family.

In terms of biological role, exhibits S-adenosyl-L-methionine-dependent methyltransferase activity. The sequence is that of Putative S-adenosyl-L-methionine-dependent methyltransferase SCO6443 from Streptomyces coelicolor (strain ATCC BAA-471 / A3(2) / M145).